We begin with the raw amino-acid sequence, 713 residues long: Topoisomerase subunit TopoM (713 aa).

Residues Ile41–Glu504 form the Topo IIA-type catalytic domain. Residue Tyr128 is the O-(5'-phospho-DNA)-tyrosine intermediate of the active site. A disordered region spans residues Asn694–Glu713.

This sequence belongs to the type II topoisomerase GyrA/ParC subunit family. A complex of TopoN and TopoM, possibly a heterotetramer. The cofactor is Mg(2+).

The catalysed reaction is ATP-dependent breakage, passage and rejoining of double-stranded DNA.. Its activity is regulated as follows. Inhibited by quinolone antibiotic ciprofloxacin and coumarin antibiotic novobiocin, but at much higher concentrations than is usual for DNA gyrase/topoisomerase. Its function is as follows. Catalyzes the relaxation of negatively supercoiled DNA in the presence of ATP or dATP but not other nucleotides. Individual subunits have no activity. Not able to negatively supercoil DNA, it can however introduce positive supercoils in DNA. Relaxes positive supercoils in an ATP-dependent manner. Catenates and decatenates DNA. Generates dsDNA breaks in the presence of the quinolone antibiotic ciprofloxacin, showing it is a topoisomerase. The chain is Topoisomerase subunit TopoM from Mycolicibacterium smegmatis (strain ATCC 700084 / mc(2)155) (Mycobacterium smegmatis).